The sequence spans 303 residues: Glutamyl-Q tRNA(Asp) synthetase (303 aa).

Residues 16–20 (RFAPS) and Glu52 contribute to the L-glutamate site. The 'HIGH' region motif lies at 19-29 (PSPSGPLHFGS). 4 residues coordinate Zn(2+): Cys108, Cys110, Tyr122, and Cys126. L-glutamate-binding residues include Tyr177 and Arg195. A 'KMSKS' region motif is present at residues 233–237 (KLSKQ). Lys236 lines the ATP pocket.

Belongs to the class-I aminoacyl-tRNA synthetase family. GluQ subfamily. It depends on Zn(2+) as a cofactor.

Its function is as follows. Catalyzes the tRNA-independent activation of glutamate in presence of ATP and the subsequent transfer of glutamate onto a tRNA(Asp). Glutamate is transferred on the 2-amino-5-(4,5-dihydroxy-2-cyclopenten-1-yl) moiety of the queuosine in the wobble position of the QUC anticodon. The sequence is that of Glutamyl-Q tRNA(Asp) synthetase from Vibrio vulnificus (strain CMCP6).